Reading from the N-terminus, the 173-residue chain is NADH-ubiquinone oxidoreductase chain 6 (173 aa).

Transmembrane regions (helical) follow at residues 1–21, 28–48, 53–73, 87–107, and 139–159; these read MVYF…GVAS, AALG…SYGG, LILF…TAAL, VLMY…YFLV, and LGGW…FVVL.

It belongs to the complex I subunit 6 family.

Its subcellular location is the mitochondrion membrane. It carries out the reaction a ubiquinone + NADH + 5 H(+)(in) = a ubiquinol + NAD(+) + 4 H(+)(out). In terms of biological role, core subunit of the mitochondrial membrane respiratory chain NADH dehydrogenase (Complex I) that is believed to belong to the minimal assembly required for catalysis. Complex I functions in the transfer of electrons from NADH to the respiratory chain. The immediate electron acceptor for the enzyme is believed to be ubiquinone. The polypeptide is NADH-ubiquinone oxidoreductase chain 6 (MT-ND6) (Scyliorhinus canicula (Small-spotted catshark)).